We begin with the raw amino-acid sequence, 559 residues long: Glutamine--tRNA ligase (559 aa).

Positions proline 44–histidine 54 match the 'HIGH' region motif. Residues glutamate 45–asparagine 47 and histidine 51–serine 57 contribute to the ATP site. The L-glutamine site is built by aspartate 77 and tyrosine 222. ATP contacts are provided by residues threonine 241 and arginine 272 to leucine 273. Residues leucine 279 to arginine 283 carry the 'KMSKS' region motif.

It belongs to the class-I aminoacyl-tRNA synthetase family. Monomer.

The protein localises to the cytoplasm. The catalysed reaction is tRNA(Gln) + L-glutamine + ATP = L-glutaminyl-tRNA(Gln) + AMP + diphosphate. This is Glutamine--tRNA ligase from Pasteurella multocida (strain Pm70).